A 551-amino-acid polypeptide reads, in one-letter code: Solute carrier family 22 member 4 (551 aa).

Over 1–20 the chain is Cytoplasmic; sequence MRDYDEAIAFLGEWGPFQRL. Residues 21–41 traverse the membrane as a helical segment; that stretch reads IFFLLSASIIPNGFNGMSVVF. The Extracellular portion of the chain corresponds to 42 to 141; sequence LAGTPEHRCR…WNLVCEDNWK (100 aa). Asparagine 57, asparagine 64, and asparagine 91 each carry an N-linked (GlcNAc...) asparagine glycan. The chain crosses the membrane as a helical span at residues 142–162; the sequence is VPLTTSLFFVGVLLGSFVSGQ. Topologically, residues 163 to 171 are cytoplasmic; sequence LSDRFGRKN. Residues 172 to 192 form a helical membrane-spanning segment; the sequence is VLFATMAVQTGFSFLQIFSIS. Over 193 to 197 the chain is Extracellular; the sequence is WEMFT. The helical transmembrane segment at 198 to 218 threads the bilayer; the sequence is VLFLIVGMGQISNYVVAFILG. Position 218–225 (218–225) interacts with ATP; the sequence is GTEILGKS. The Cytoplasmic segment spans residues 219–232; it reads TEILGKSVRIIFST. Residues 233–253 traverse the membrane as a helical segment; that stretch reads LGVCTFFAVGYMLLPLFAYFI. Over 254–257 the chain is Extracellular; that stretch reads RDWR. The helical transmembrane segment at 258 to 278 threads the bilayer; the sequence is MLLLALTVPGVLCVPLWWFIP. Over 279–337 the chain is Cytoplasmic; it reads ESPRWLISQRRFREAEDIIQKAAKMNNIAVPAVIFDSVEELNPLKQQKAFILDLFRTWN. A helical transmembrane segment spans residues 338 to 358; sequence IAIMTIMSLLLWMLTSVGYFA. The Extracellular portion of the chain corresponds to 359–371; that stretch reads LSLDTPNLHGDAY. Residues 372–392 form a helical membrane-spanning segment; it reads LNCFLSALIEIPAYITAWLLL. Topologically, residues 393-399 are cytoplasmic; sequence RTLPRRY. A helical membrane pass occupies residues 400–420; that stretch reads IIAAVLFWGGGVLLFIQLVPV. Over 421-426 the chain is Extracellular; it reads DYYFLS. The chain crosses the membrane as a helical span at residues 427–447; it reads IGLVMLGKFGITSAFSMLYVF. The Cytoplasmic segment spans residues 448–460; the sequence is TAELYPTMVRNMA. A helical transmembrane segment spans residues 461 to 481; the sequence is VGVTSMASRVGSIIAPYFVYL. The Extracellular portion of the chain corresponds to 482-486; sequence GAYNR. Residues 487–507 form a helical membrane-spanning segment; that stretch reads MLPYIVMGSLTVLIGILTLFF. The Cytoplasmic segment spans residues 508-551; it reads PESLGMTLPETLEQMQKVKWFRSGKKTRDSMETEENPKVLITAF.

The protein belongs to the major facilitator (TC 2.A.1) superfamily. Organic cation transporter (TC 2.A.1.19) family. Interacts with PDZK1.

The protein resides in the apical cell membrane. It localises to the basal cell membrane. The protein localises to the mitochondrion membrane. The catalysed reaction is ergothioneine(out) + Na(+)(out) = ergothioneine(in) + Na(+)(in). The enzyme catalyses acetylcholine(in) = acetylcholine(out). It carries out the reaction (R)-carnitine(out) + Na(+)(out) = (R)-carnitine(in) + Na(+)(in). It catalyses the reaction glycine betaine(out) + Na(+)(out) = glycine betaine(in) + Na(+)(in). Allosterically activated by intracellular ATP. Transporter that mediates the transport of endogenous and microbial zwitterions and organic cations. Functions as a Na(+)-dependent and pH-dependent high affinity microbial symporter of potent food-derived antioxidant ergothioeine. Transports one sodium ion with one ergothioeine molecule. Involved in the absorption of ergothioneine from the luminal/apical side of the small intestine and renal tubular cells, and into non-parenchymal liver cells, thereby contributing to maintain steady-state ergothioneine level in the body. Also mediates the bidirectional transport of acetycholine, although the exact transport mechanism has not been fully identified yet. Most likely exports anti-inflammatory acetylcholine in non-neuronal tissues, thereby contributing to the non-neuronal cholinergic system. Displays a general physiological role linked to better survival by controlling inflammation and oxidative stress, which may be related to ergothioneine and acetycholine transports. May also function as a low-affinity Na(+)-dependent transporter of L-carnitine through the mitochondrial membrane, thereby maintaining intracellular carnitine homeostasis. May contribute to regulate the transport of cationic compounds in testis across the blood-testis-barrier. The polypeptide is Solute carrier family 22 member 4 (SLC22A4) (Papio anubis (Olive baboon)).